Here is an 853-residue protein sequence, read N- to C-terminus: DNA mismatch repair protein MutS (853 aa).

614–621 serves as a coordination point for ATP; sequence GPNMGGKS.

It belongs to the DNA mismatch repair MutS family.

Its function is as follows. This protein is involved in the repair of mismatches in DNA. It is possible that it carries out the mismatch recognition step. This protein has a weak ATPase activity. The chain is DNA mismatch repair protein MutS from Shigella flexneri serotype 5b (strain 8401).